Consider the following 369-residue polypeptide: Ribonuclease D (369 aa).

Residues 4–168 (EIITTTAQLH…CLEKLQQQLE (165 aa)) enclose the 3'-5' exonuclease domain. Residues 207-286 (DRQGLAIIKA…TQVISQDEST (80 aa)) enclose the HRDC domain.

Belongs to the RNase D family. A divalent metal cation serves as cofactor.

The protein localises to the cytoplasm. It catalyses the reaction Exonucleolytic cleavage that removes extra residues from the 3'-terminus of tRNA to produce 5'-mononucleotides.. Exonuclease involved in the 3' processing of various precursor tRNAs. Initiates hydrolysis at the 3'-terminus of an RNA molecule and releases 5'-mononucleotides. This is Ribonuclease D from Psychromonas ingrahamii (strain DSM 17664 / CCUG 51855 / 37).